The sequence spans 108 residues: DNA-binding protein HBbu (108 aa).

The protein belongs to the bacterial histone-like protein family.

Functionally, histone-like DNA-binding protein which is capable of wrapping DNA to stabilize it, and thus to prevent its denaturation under extreme environmental conditions. This Borreliella japonica (Borrelia japonica) protein is DNA-binding protein HBbu (hbb).